The chain runs to 485 residues: Protein LAZ1 (485 aa).

Topologically, residues 1–19 (MDILKSYHLLAAAYSAPAW) are cytoplasmic. The chain crosses the membrane as a helical span at residues 20–40 (ASFMAGAFLVLTLSLSLFLVF). Topologically, residues 41-53 (DHLSTYKNPEEQK) are lumenal. The helical transmembrane segment at 54–74 (FLIGVILMVPCYSIESFASLV) threads the bilayer. The Cytoplasmic segment spans residues 75–167 (KPSISVDCGI…QVVKFGIVQY (93 aa)). A helical transmembrane segment spans residues 168-188 (MIIKSLTALTALILEAFGVYC). The Lumenal portion of the chain corresponds to 189-196 (EGEFKWGC). A helical membrane pass occupies residues 197-217 (GYPYLAVVLNFSQSWALYCLV). Topologically, residues 218 to 241 (QFYGATKDELAHIQPLAKFLTFKS) are cytoplasmic. A helical membrane pass occupies residues 242–262 (IVFLTWWQGVAIALLSSLGLF). Residues 263-277 (KSSIAQSLQLKTSVQ) lie on the Lumenal side of the membrane. Residues 278–298 (DFIICIEMGIASVVHLYVFPA) form a helical membrane-spanning segment. Residues 299–485 (KPYGLMGDRF…VRGRRWITKD (187 aa)) are Cytoplasmic-facing. A coiled-coil region spans residues 384-415 (MEKSITKFNEKLHKISQNIKKHDKEKRRVKDD). The tract at residues 400–485 (QNIKKHDKEK…VRGRRWITKD (86 aa)) is disordered. Residues 403–416 (KKHDKEKRRVKDDS) show a composition bias toward basic and acidic residues. Residues 455–469 (GYTSAESGGESSSDQ) are compositionally biased toward polar residues. Positions 476-485 (VRGRRWITKD) are enriched in basic and acidic residues.

It belongs to the TMEM184 family.

The protein localises to the endomembrane system. It localises to the cell membrane. Its subcellular location is the cytoplasm. The protein resides in the cytosol. Functionally, required for programmed cell death (PCD) associated with hypersensitive response (HR). Involved both in the induction of EDS1/PAD4 mediated HR and in accelerated cell death in the acd11 mutant. Not required for HR induction elicited through pathways exclusively dependent on CC-NB-LRR resistance proteins. This is Protein LAZ1 from Arabidopsis thaliana (Mouse-ear cress).